We begin with the raw amino-acid sequence, 190 residues long: Bifunctional protein PyrR (190 aa).

Positions 107–119 (IILVDDVLYSGRT) match the PRPP-binding motif.

The protein belongs to the purine/pyrimidine phosphoribosyltransferase family. PyrR subfamily.

It catalyses the reaction UMP + diphosphate = 5-phospho-alpha-D-ribose 1-diphosphate + uracil. Regulates the transcription of the pyrimidine nucleotide (pyr) operon in response to exogenous pyrimidines. Functionally, also displays a weak uracil phosphoribosyltransferase activity which is not physiologically significant. This chain is Bifunctional protein PyrR, found in Corynebacterium diphtheriae (strain ATCC 700971 / NCTC 13129 / Biotype gravis).